Here is a 522-residue protein sequence, read N- to C-terminus: GMP synthase [glutamine-hydrolyzing] (522 aa).

The region spanning 8–204 (RLLIIDFGSQ…FVRLAGFKGD (197 aa)) is the Glutamine amidotransferase type-1 domain. The active-site Nucleophile is Cys86. Catalysis depends on residues His179 and Glu181. The region spanning 205-397 (WTMGAYREEA…LGLPASFIGR (193 aa)) is the GMPS ATP-PPase domain. 232–238 (SGGVDSS) is an ATP binding site.

As to quaternary structure, homodimer.

It catalyses the reaction XMP + L-glutamine + ATP + H2O = GMP + L-glutamate + AMP + diphosphate + 2 H(+). The protein operates within purine metabolism; GMP biosynthesis; GMP from XMP (L-Gln route): step 1/1. Its function is as follows. Catalyzes the synthesis of GMP from XMP. This is GMP synthase [glutamine-hydrolyzing] from Roseobacter denitrificans (strain ATCC 33942 / OCh 114) (Erythrobacter sp. (strain OCh 114)).